Reading from the N-terminus, the 364-residue chain is Aminomethyltransferase (364 aa).

Belongs to the GcvT family. The glycine cleavage system is composed of four proteins: P, T, L and H.

It catalyses the reaction N(6)-[(R)-S(8)-aminomethyldihydrolipoyl]-L-lysyl-[protein] + (6S)-5,6,7,8-tetrahydrofolate = N(6)-[(R)-dihydrolipoyl]-L-lysyl-[protein] + (6R)-5,10-methylene-5,6,7,8-tetrahydrofolate + NH4(+). Functionally, the glycine cleavage system catalyzes the degradation of glycine. This Shewanella baltica (strain OS223) protein is Aminomethyltransferase.